The chain runs to 496 residues: Cytochrome P450 71AV8 (496 aa).

A helical transmembrane segment spans residues 3-23 (ISIPTTLGLAVIIFIIFKLLT). C432 contributes to the heme binding site.

It belongs to the cytochrome P450 family. It depends on heme as a cofactor.

It localises to the membrane. Valencene oxidase, which preferentially hydroylates the C2 position of (+)-valencene in the trans-orientation, producing trans-nootkatol that can be further oxidized to (+)-nootkatone. Can also catalyze the three-step conversion of germacrene A to germacra-1(10),4,11(13)-trien-12-oic acid and the partial conversion of the non-natural substrate amorpha-4,11-diene into artemisinic alcohol and artemisinic aldehyde. This Cichorium intybus (Chicory) protein is Cytochrome P450 71AV8 (CYP71AV8).